A 357-amino-acid polypeptide reads, in one-letter code: Peptide chain release factor 1 (357 aa).

Q234 is subject to N5-methylglutamine.

The protein belongs to the prokaryotic/mitochondrial release factor family. In terms of processing, methylated by PrmC. Methylation increases the termination efficiency of RF1.

The protein localises to the cytoplasm. Its function is as follows. Peptide chain release factor 1 directs the termination of translation in response to the peptide chain termination codons UAG and UAA. This is Peptide chain release factor 1 from Chlorobaculum tepidum (strain ATCC 49652 / DSM 12025 / NBRC 103806 / TLS) (Chlorobium tepidum).